The chain runs to 431 residues: UDP-N-acetylglucosamine 1-carboxyvinyltransferase (431 aa).

22–23 (KN) lines the phosphoenolpyruvate pocket. R102 is a binding site for UDP-N-acetyl-alpha-D-glucosamine. Catalysis depends on C126, which acts as the Proton donor. C126 carries the 2-(S-cysteinyl)pyruvic acid O-phosphothioketal modification. Residues 131–135 (RPVDL), D316, and I338 contribute to the UDP-N-acetyl-alpha-D-glucosamine site.

Belongs to the EPSP synthase family. MurA subfamily.

The protein resides in the cytoplasm. The enzyme catalyses phosphoenolpyruvate + UDP-N-acetyl-alpha-D-glucosamine = UDP-N-acetyl-3-O-(1-carboxyvinyl)-alpha-D-glucosamine + phosphate. It participates in cell wall biogenesis; peptidoglycan biosynthesis. Functionally, cell wall formation. Adds enolpyruvyl to UDP-N-acetylglucosamine. This is UDP-N-acetylglucosamine 1-carboxyvinyltransferase from Beijerinckia indica subsp. indica (strain ATCC 9039 / DSM 1715 / NCIMB 8712).